A 95-amino-acid polypeptide reads, in one-letter code: Phosphoribosyl-ATP pyrophosphatase (95 aa).

It belongs to the PRA-PH family.

It is found in the cytoplasm. It carries out the reaction 1-(5-phospho-beta-D-ribosyl)-ATP + H2O = 1-(5-phospho-beta-D-ribosyl)-5'-AMP + diphosphate + H(+). The protein operates within amino-acid biosynthesis; L-histidine biosynthesis; L-histidine from 5-phospho-alpha-D-ribose 1-diphosphate: step 2/9. The sequence is that of Phosphoribosyl-ATP pyrophosphatase from Sulfolobus acidocaldarius (strain ATCC 33909 / DSM 639 / JCM 8929 / NBRC 15157 / NCIMB 11770).